We begin with the raw amino-acid sequence, 522 residues long: Glutamate--cysteine ligase, chloroplastic (522 aa).

The N-terminal 45 residues, 1-45 (MALMSQAGSSHCIYSEKMKCISGHSSITSNMEMLKMKDICFGNIS), are a transit peptide targeting the chloroplast. Cys-186 and Cys-406 are joined by a disulfide.

It belongs to the carboxylate-amine ligase family. Glutamate--cysteine ligase type 2 subfamily. As to quaternary structure, homodimer or monomer when oxidized or reduced, respectively. In terms of processing, the Cys-186-Cys-406 disulfide bridge is known to modulate the enzyme activity according to the redox status. The oxidized form constitutes the active enzyme.

The protein resides in the plastid. Its subcellular location is the chloroplast. The enzyme catalyses L-cysteine + L-glutamate + ATP = gamma-L-glutamyl-L-cysteine + ADP + phosphate + H(+). It participates in sulfur metabolism; glutathione biosynthesis; glutathione from L-cysteine and L-glutamate: step 1/2. This chain is Glutamate--cysteine ligase, chloroplastic (GSH1), found in Nicotiana tabacum (Common tobacco).